The chain runs to 362 residues: MIDPFKRLARKGLFLFDPETAHGMSIAALKSGLVPACQITPDPRLCQTVAGLTFENPLGMAAGYDKNAEVPEALLKLGFGFTEIGTVTPKPQAGNPRPRIFRLVEDEAVINRLGFNNEGHEAAFGRLAALSGRGIVGVNIGANKDSEDRIADYVAGIRRFHSVARYFTANISSPNTPGLRDLQARESLAALLSSVLAARDEVAAASGRKVPVFLKIAPDLTEEGMDDIAAEALAHALDGLIVSNTTLSRDGLKDQRQAKETGGLSGVPLFEKSTAVLARMRKRVGAALPIIGVGGVSSAETALEKIRAGADLVQLYSCMVYEGPGLPGDIVRGLSKLMDREKAAGIGELRDSRLDYWAARKV.

Residues 62–66 and Thr86 each bind FMN; that span reads AGYDK. Position 66 (Lys66) interacts with substrate. 111-115 lines the substrate pocket; it reads NRLGF. Residues Asn139 and Asn170 each coordinate FMN. Residue Asn170 participates in substrate binding. Residue Ser173 is the Nucleophile of the active site. Substrate is bound at residue Asn175. The FMN site is built by Lys215 and Ser243. Substrate is bound at residue 244-245; sequence NT. FMN-binding positions include Gly266, Gly295, and 316-317; that span reads YS.

It belongs to the dihydroorotate dehydrogenase family. Type 2 subfamily. As to quaternary structure, monomer. Requires FMN as cofactor.

The protein resides in the cell membrane. The enzyme catalyses (S)-dihydroorotate + a quinone = orotate + a quinol. It functions in the pathway pyrimidine metabolism; UMP biosynthesis via de novo pathway; orotate from (S)-dihydroorotate (quinone route): step 1/1. In terms of biological role, catalyzes the conversion of dihydroorotate to orotate with quinone as electron acceptor. This Rhizobium leguminosarum bv. trifolii (strain WSM2304) protein is Dihydroorotate dehydrogenase (quinone).